Here is a 183-residue protein sequence, read N- to C-terminus: Non-classical export protein 2 homolog (183 aa).

The Cytoplasmic portion of the chain corresponds to 1–8; sequence MVGIRQYG. The chain crosses the membrane as a helical span at residues 9–29; the sequence is VFTWVFRTFQLAIDTIVLALA. Residues 30–44 lie on the Extracellular side of the membrane; sequence SALVNQQTSGGSPGK. A helical membrane pass occupies residues 45 to 65; that stretch reads INFSVAVGSFAILTFFLTAVG. Topologically, residues 66 to 75 are cytoplasmic; the sequence is RFLPTILGNP. Residues 76 to 96 traverse the membrane as a helical segment; the sequence is WLIAFYDFVNWVFALTGGCCI. At 97 to 131 the chain is on the extracellular side; that stretch reads AVAIRVHACDNQKYLDRNHYTQGSMRRCQELKALC. The chain crosses the membrane as a helical span at residues 132–152; sequence FFLWFMFGLYVASFIVQIFIA. The Cytoplasmic portion of the chain corresponds to 153–183; it reads KNDTPNYTFRGRGRGKGSGPAVAPRPVMSAV. The tract at residues 163 to 183 is disordered; sequence GRGRGKGSGPAVAPRPVMSAV.

It belongs to the NCE102 family.

It localises to the cytoplasm. It is found in the golgi apparatus membrane. Its subcellular location is the cell membrane. Its function is as follows. Involved in membrane organization and might act as a sensor of sphingolipids that regulates plasma membrane function. Involved in a novel pathway of export of proteins that lack a cleavable signal sequence. The protein is Non-classical export protein 2 homolog (fhn1) of Schizosaccharomyces pombe (strain 972 / ATCC 24843) (Fission yeast).